A 521-amino-acid polypeptide reads, in one-letter code: Amidase (521 aa).

Active-site charge relay system residues include K96 and S171. The segment at 155–174 is disordered; that stretch reads SGPVRNPWDRQREAGGSSGG. The Acyl-ester intermediate role is filled by S195.

This sequence belongs to the amidase family. As to quaternary structure, homodimer.

The enzyme catalyses a monocarboxylic acid amide + H2O = a monocarboxylate + NH4(+). Its function is as follows. Hydrolyzes propionamides efficiently, and also at a lower efficiency, acetamide, acrylamide and indoleacetamide. This enzyme seems to be stereospecific and can lead to the production of a single enantiomer. In Rhodococcus erythropolis (Arthrobacter picolinophilus), this protein is Amidase (amdA).